We begin with the raw amino-acid sequence, 265 residues long: Palmitoyltransferase ZDHHC21 (265 aa).

Over methionine 1–cysteine 16 the chain is Cytoplasmic. The helical transmembrane segment at methionine 17–phenylalanine 37 threads the bilayer. Residues proline 38 to histidine 44 lie on the Extracellular side of the membrane. Residues isoleucine 45–valine 65 form a helical membrane-spanning segment. Residues arginine 66–tryptophan 133 are Cytoplasmic-facing. One can recognise a DHHC domain in the interval glutamate 90 to phenylalanine 140. Cysteine 120 serves as the catalytic S-palmitoyl cysteine intermediate. Residues leucine 134–phenylalanine 154 traverse the membrane as a helical segment. The Extracellular portion of the chain corresponds to cysteine 155–phenylalanine 185. The helical transmembrane segment at methionine 186–isoleucine 206 threads the bilayer. Residues threonine 207–valine 265 are Cytoplasmic-facing.

This sequence belongs to the DHHC palmitoyltransferase family.

The protein resides in the golgi apparatus membrane. Its subcellular location is the golgi apparatus. It is found in the cis-Golgi network membrane. The protein localises to the cell membrane. The catalysed reaction is L-cysteinyl-[protein] + hexadecanoyl-CoA = S-hexadecanoyl-L-cysteinyl-[protein] + CoA. Functionally, palmitoyltransferase that catalyzes the addition of palmitate onto various protein substrates. Palmitoylates sex steroid hormone receptors, including ESR1, PGR and AR, thereby regulating their targeting to the plasma membrane. This affects rapid intracellular signaling by sex hormones via ERK and AKT kinases and the generation of cAMP, but does not affect that mediated by their nuclear receptor. Palmitoylates FYN, regulates its localization in hair follicles and plays a key role in epidermal homeostasis and hair follicle differentiation. Through the palmitoylation of PLCB1 and the regulation of PLCB1 downstream signaling may indirectly regulate the function of the endothelial barrier and the adhesion of leukocytes to the endothelium. Also has a palmitoyltransferase activity toward ADRA1D, positively regulating its activity and expression and may thereby play a role in vascular contraction. May also palmitoylate eNOS and LCK. The sequence is that of Palmitoyltransferase ZDHHC21 from Bos taurus (Bovine).